Reading from the N-terminus, the 199-residue chain is Imidazole glycerol phosphate synthase subunit HisH 2 (199 aa).

Residues 1–199 form the Glutamine amidotransferase type-1 domain; it reads MIAVIDVSGN…NNFLSLESTC (199 aa). Cys76 serves as the catalytic Nucleophile. Catalysis depends on residues His177 and Glu179.

As to quaternary structure, heterodimer of HisH and HisF.

The protein localises to the cytoplasm. It catalyses the reaction 5-[(5-phospho-1-deoxy-D-ribulos-1-ylimino)methylamino]-1-(5-phospho-beta-D-ribosyl)imidazole-4-carboxamide + L-glutamine = D-erythro-1-(imidazol-4-yl)glycerol 3-phosphate + 5-amino-1-(5-phospho-beta-D-ribosyl)imidazole-4-carboxamide + L-glutamate + H(+). It carries out the reaction L-glutamine + H2O = L-glutamate + NH4(+). It participates in amino-acid biosynthesis; L-histidine biosynthesis; L-histidine from 5-phospho-alpha-D-ribose 1-diphosphate: step 5/9. Its function is as follows. IGPS catalyzes the conversion of PRFAR and glutamine to IGP, AICAR and glutamate. The HisH subunit provides the glutamine amidotransferase activity that produces the ammonia necessary to HisF for the synthesis of IGP and AICAR. The sequence is that of Imidazole glycerol phosphate synthase subunit HisH 2 from Legionella pneumophila (strain Paris).